Here is a 467-residue protein sequence, read N- to C-terminus: 3-isopropylmalate dehydratase large subunit (467 aa).

Residues Cys348, Cys409, and Cys412 each contribute to the [4Fe-4S] cluster site.

It belongs to the aconitase/IPM isomerase family. LeuC type 1 subfamily. In terms of assembly, heterodimer of LeuC and LeuD. Requires [4Fe-4S] cluster as cofactor.

It carries out the reaction (2R,3S)-3-isopropylmalate = (2S)-2-isopropylmalate. It functions in the pathway amino-acid biosynthesis; L-leucine biosynthesis; L-leucine from 3-methyl-2-oxobutanoate: step 2/4. Catalyzes the isomerization between 2-isopropylmalate and 3-isopropylmalate, via the formation of 2-isopropylmaleate. This Thiobacillus denitrificans (strain ATCC 25259 / T1) protein is 3-isopropylmalate dehydratase large subunit.